The sequence spans 388 residues: Queuine tRNA-ribosyltransferase (388 aa).

Residue D91 is the Proton acceptor of the active site. Substrate contacts are provided by residues 91–95 (DSGGY), D145, Q190, and G217. Residues 248-254 (GVGAPED) form an RNA binding region. Residue D267 is the Nucleophile of the active site. Residues 272-276 (TRLAR) form an RNA binding; important for wobble base 34 recognition region. Positions 305, 307, 310, and 336 each coordinate Zn(2+).

The protein belongs to the queuine tRNA-ribosyltransferase family. Homodimer. Within each dimer, one monomer is responsible for RNA recognition and catalysis, while the other monomer binds to the replacement base PreQ1. Requires Zn(2+) as cofactor.

The catalysed reaction is 7-aminomethyl-7-carbaguanine + guanosine(34) in tRNA = 7-aminomethyl-7-carbaguanosine(34) in tRNA + guanine. It participates in tRNA modification; tRNA-queuosine biosynthesis. Functionally, catalyzes the base-exchange of a guanine (G) residue with the queuine precursor 7-aminomethyl-7-deazaguanine (PreQ1) at position 34 (anticodon wobble position) in tRNAs with GU(N) anticodons (tRNA-Asp, -Asn, -His and -Tyr). Catalysis occurs through a double-displacement mechanism. The nucleophile active site attacks the C1' of nucleotide 34 to detach the guanine base from the RNA, forming a covalent enzyme-RNA intermediate. The proton acceptor active site deprotonates the incoming PreQ1, allowing a nucleophilic attack on the C1' of the ribose to form the product. After dissociation, two additional enzymatic reactions on the tRNA convert PreQ1 to queuine (Q), resulting in the hypermodified nucleoside queuosine (7-(((4,5-cis-dihydroxy-2-cyclopenten-1-yl)amino)methyl)-7-deazaguanosine). The sequence is that of Queuine tRNA-ribosyltransferase from Dictyoglomus turgidum (strain DSM 6724 / Z-1310).